Here is a 33-residue protein sequence, read N- to C-terminus: Brevinin-2LT (33 aa).

A disulfide bridge connects residues cysteine 27 and cysteine 33.

As to expression, expressed by the skin glands.

Its subcellular location is the secreted. Has antibacterial activity. The sequence is that of Brevinin-2LT from Rana latastei (Italian agile frog).